The chain runs to 410 residues: MGDKGTRVFKKASPNGKLTVYLGKRDFVDHIDLVDPVDGVVLVDPEYLKERRVYVTLTCAFRYGREDLDVLGLTFRKDLFVANVQSFPPAPEDKKPLTRLQERLIKKLGEHAYPFTFEIPPNLPCSVTLQPGPEDTGKACGVDYEVKAFCAENLEEKIHKRNSVRLVIRKVQYAPERPGPQPTAETTRQFLMSDKPLHLEASLDKEIYYHGEPISVNVHVTNNTNKTVKKIKISVRQYADICLFNTAQYKCPVAMEEADDTVAPSSTFCKVYTLTPFLANNREKRGLALDGKLKHEDTNLASSTLLREGANREILGIIVSYKVKVKLVVSRGGDVAVELPFTLMHPKPKEEPLHREVPENQTPVDTNLIELDTNDDDIVFEDFARQRLKGMKDDKEEEENGTGSPQLNNR.

Positions 1-163 (MGDKGTRVFK…LEEKIHKRNS (163 aa)) are interaction with SRC. An interaction with CHRM2 region spans residues 45–86 (PEYLKERRVYVTLTCAFRYGREDLDVLGLTFRKDLFVANVQS). Tyr47 bears the Phosphotyrosine mark. Residues Lys250, Met255, Lys324, and Lys326 each contribute to the 1D-myo-inositol hexakisphosphate site. The segment at 318 to 410 (IVSYKVKVKL…GTGSPQLNNR (93 aa)) is interaction with TRAF6. The short motif at 385-395 (RQRLKGMKDDK) is the [DE]-X(1,2)-F-X-X-[FL]-X-X-X-R motif element. The tract at residues 389 to 410 (KGMKDDKEEEENGTGSPQLNNR) is disordered. Residues 401 to 410 (GTGSPQLNNR) show a composition bias toward polar residues. Ser404 is subject to Phosphoserine; by GRK5.

It belongs to the arrestin family. As to quaternary structure, monomer. Homodimer. Homooligomer; the self-association is mediated by InsP6-binding. Heterooligomer with ARRB2; the association is mediated by InsP6-binding. Interacts with ADRB2 (phosphorylated). Interacts with CHRM2 (phosphorylated). Interacts with LHCGR. Interacts with CYTH2 and CASR. Interacts with AP2B1 (dephosphorylated); phosphorylation of AP2B1 disrupts the interaction. Interacts (dephosphorylated at Ser-404) with CLTC. Interacts with CCR2 and GRK2. Interacts with CRR5. Interacts with PTAFR (phosphorylated on serine residues). Interacts with CLTC and MAP2K3. Interacts with CREB1. Interacts with TRAF6. Interacts with IGF1R and MDM2. Interacts with C5AR1. Interacts with PDE4D. Interacts with SRC (via the SH3 domain and the protein kinase domain); the interaction is independent of the phosphorylation state of SRC C-terminus. Interacts with TACR1. Interacts with RAF1. Interacts with CHUK, IKBKB and MAP3K14. Interacts with DVL1; the interaction is enhanced by phosphorylation of DVL1. Interacts with DVL2; the interaction is enhanced by phosphorylation of DVL2. Interacts with IGF1R. Associates with MAP kinase p38. Part of a MAPK signaling complex consisting of TACR1, ARRB1, SRC, MAPK1 (activated) and MAPK3 (activated). Part of a MAPK signaling complex consisting of F2RL1, ARRB1, RAF1, MAPK1 (activated) and MAPK3 (activated). Interacts with GPR143. Interacts with MAP2K4/MKK4. Interacts with HCK and CXCR1 (phosphorylated). Interacts with ACKR3 and ACKR4. Interacts with ARRDC1; the interaction is direct. Interacts with GPR61, GPR62 and GPR135. Constitutively phosphorylated at in the cytoplasm. At the plasma membrane, is rapidly dephosphorylated, a process that is required for clathrin binding and ADRB2 endocytosis but not for ADRB2 binding and desensitization. Once internalized, is rephosphorylated. Post-translationally, the ubiquitination status appears to regulate the formation and trafficking of beta-arrestin-GPCR complexes and signaling. Ubiquitination appears to occur GPCR-specific. Ubiquitinated by MDM2; the ubiquitination is required for rapid internalization of ADRB2. Deubiquitinated by USP33; the deubiquitination leads to a dissociation of the beta-arrestin-GPCR complex. Stimulation of a class A GPCR, such as ADRB2, induces transient ubiquitination and subsequently promotes association with USP33.

The protein localises to the cytoplasm. Its subcellular location is the nucleus. It localises to the cell membrane. The protein resides in the membrane. It is found in the clathrin-coated pit. The protein localises to the cell projection. Its subcellular location is the pseudopodium. It localises to the cytoplasmic vesicle. In terms of biological role, functions in regulating agonist-mediated G-protein coupled receptor (GPCR) signaling by mediating both receptor desensitization and resensitization processes. During homologous desensitization, beta-arrestins bind to the GPRK-phosphorylated receptor and sterically preclude its coupling to the cognate G-protein; the binding appears to require additional receptor determinants exposed only in the active receptor conformation. The beta-arrestins target many receptors for internalization by acting as endocytic adapters (CLASPs, clathrin-associated sorting proteins) and recruiting the GPRCs to the adapter protein 2 complex 2 (AP-2) in clathrin-coated pits (CCPs). However, the extent of beta-arrestin involvement appears to vary significantly depending on the receptor, agonist and cell type. Internalized arrestin-receptor complexes traffic to intracellular endosomes, where they remain uncoupled from G-proteins. Two different modes of arrestin-mediated internalization occur. Class A receptors, like ADRB2, OPRM1, ENDRA, D1AR and ADRA1B dissociate from beta-arrestin at or near the plasma membrane and undergo rapid recycling. Class B receptors, like AVPR2, AGTR1, NTSR1, TRHR and TACR1 internalize as a complex with arrestin and traffic with it to endosomal vesicles, presumably as desensitized receptors, for extended periods of time. Receptor resensitization then requires that receptor-bound arrestin is removed so that the receptor can be dephosphorylated and returned to the plasma membrane. Involved in internalization of P2RY4 and UTP-stimulated internalization of P2RY2. Involved in phosphorylation-dependent internalization of OPRD1 ands subsequent recycling. Involved in the degradation of cAMP by recruiting cAMP phosphodiesterases to ligand-activated receptors. Beta-arrestins function as multivalent adapter proteins that can switch the GPCR from a G-protein signaling mode that transmits short-lived signals from the plasma membrane via small molecule second messengers and ion channels to a beta-arrestin signaling mode that transmits a distinct set of signals that are initiated as the receptor internalizes and transits the intracellular compartment. Acts as a signaling scaffold for MAPK pathways such as MAPK1/3 (ERK1/2). ERK1/2 activated by the beta-arrestin scaffold is largely excluded from the nucleus and confined to cytoplasmic locations such as endocytic vesicles, also called beta-arrestin signalosomes. Recruits c-Src/SRC to ADRB2 resulting in ERK activation. GPCRs for which the beta-arrestin-mediated signaling relies on both ARRB1 and ARRB2 (codependent regulation) include ADRB2, F2RL1 and PTH1R. For some GPCRs the beta-arrestin-mediated signaling relies on either ARRB1 or ARRB2 and is inhibited by the other respective beta-arrestin form (reciprocal regulation). Inhibits ERK1/2 signaling in AGTR1- and AVPR2-mediated activation (reciprocal regulation). Is required for SP-stimulated endocytosis of NK1R and recruits c-Src/SRC to internalized NK1R resulting in ERK1/2 activation, which is required for the antiapoptotic effects of SP. Is involved in proteinase-activated F2RL1-mediated ERK activity. Acts as a signaling scaffold for the AKT1 pathway. Is involved in alpha-thrombin-stimulated AKT1 signaling. Is involved in IGF1-stimulated AKT1 signaling leading to increased protection from apoptosis. Involved in activation of the p38 MAPK signaling pathway and in actin bundle formation. Involved in F2RL1-mediated cytoskeletal rearrangement and chemotaxis. Involved in AGTR1-mediated stress fiber formation by acting together with GNAQ to activate RHOA. Appears to function as signaling scaffold involved in regulation of MIP-1-beta-stimulated CCR5-dependent chemotaxis. Involved in attenuation of NF-kappa-B-dependent transcription in response to GPCR or cytokine stimulation by interacting with and stabilizing CHUK. May serve as nuclear messenger for GPCRs. Involved in OPRD1-stimulated transcriptional regulation by translocating to CDKN1B and FOS promoter regions and recruiting EP300 resulting in acetylation of histone H4. Involved in regulation of LEF1 transcriptional activity via interaction with DVL1 and/or DVL2 Also involved in regulation of receptors other than GPCRs. Involved in Toll-like receptor and IL-1 receptor signaling through the interaction with TRAF6 which prevents TRAF6 autoubiquitination and oligomerization required for activation of NF-kappa-B and JUN. Involved in IL8-mediated granule release in neutrophils. Binds phosphoinositides. Binds inositolhexakisphosphate (InsP6). Required for atypical chemokine receptor ACKR2-induced RAC1-LIMK1-PAK1-dependent phosphorylation of cofilin (CFL1) and for the up-regulation of ACKR2 from endosomal compartment to cell membrane, increasing its efficiency in chemokine uptake and degradation. Involved in the internalization of the atypical chemokine receptor ACKR3. Negatively regulates the NOTCH signaling pathway by mediating the ubiquitination and degradation of NOTCH1 by ITCH. Participates in the recruitment of the ubiquitin-protein ligase to the receptor. This chain is Beta-arrestin-1 (ARRB1), found in Macaca fascicularis (Crab-eating macaque).